Reading from the N-terminus, the 462-residue chain is Chromosomal replication initiator protein DnaA (462 aa).

The tract at residues 1–84 is domain I, interacts with DnaA modulators; it reads MAVSLWQQCI…RFDIGSRPSA (84 aa). The segment at 84-125 is domain II; it reads AKKPSVPAPIAPTRVANTQTKATVGTTFNVQAEPMANANHRS. Positions 126–342 are domain III, AAA+ region; the sequence is NINPSYQFDN…GALNRVIANA (217 aa). Residues Gly170, Gly172, Lys173, and Thr174 each coordinate ATP. The interval 343-462 is domain IV, binds dsDNA; it reads NFTGRPITID…YANLIRTLSS (120 aa).

The protein belongs to the DnaA family. Oligomerizes as a right-handed, spiral filament on DNA at oriC.

The protein localises to the cytoplasm. Its function is as follows. Plays an essential role in the initiation and regulation of chromosomal replication. ATP-DnaA binds to the origin of replication (oriC) to initiate formation of the DNA replication initiation complex once per cell cycle. Binds the DnaA box (a 9 base pair repeat at the origin) and separates the double-stranded (ds)DNA. Forms a right-handed helical filament on oriC DNA; dsDNA binds to the exterior of the filament while single-stranded (ss)DNA is stabiized in the filament's interior. The ATP-DnaA-oriC complex binds and stabilizes one strand of the AT-rich DNA unwinding element (DUE), permitting loading of DNA polymerase. After initiation quickly degrades to an ADP-DnaA complex that is not apt for DNA replication. Binds acidic phospholipids. The sequence is that of Chromosomal replication initiator protein DnaA from Shewanella baltica (strain OS195).